We begin with the raw amino-acid sequence, 409 residues long: Putative kinase Y4dM (409 aa).

The active-site Proton acceptor is the Asp-293.

It belongs to the HipA Ser/Thr kinase family.

The protein is Putative kinase Y4dM of Sinorhizobium fredii (strain NBRC 101917 / NGR234).